We begin with the raw amino-acid sequence, 590 residues long: Enhancer of polycomb-like protein 1 (590 aa).

Disordered stretches follow at residues D302–S335 and T471–V497. A compositionally biased stretch (basic and acidic residues) spans E475 to S488.

Belongs to the enhancer of polycomb family. In terms of assembly, component of the NuA4 histone acetyltransferase complex.

Its subcellular location is the nucleus. Functionally, component of the NuA4 histone acetyltransferase complex which is involved in transcriptional activation of selected genes principally by acetylation of nucleosomal histone H4 and H2A. The NuA4 complex is also involved in DNA repair. Involved in gene silencing by neighboring heterochromatin, blockage of the silencing spreading along the chromosome, and required for cell cycle progression through G2/M. This is Enhancer of polycomb-like protein 1 (EPL1) from Gibberella zeae (strain ATCC MYA-4620 / CBS 123657 / FGSC 9075 / NRRL 31084 / PH-1) (Wheat head blight fungus).